The sequence spans 127 residues: Large ribosomal subunit protein bL19 (127 aa).

Belongs to the bacterial ribosomal protein bL19 family.

Functionally, this protein is located at the 30S-50S ribosomal subunit interface and may play a role in the structure and function of the aminoacyl-tRNA binding site. This is Large ribosomal subunit protein bL19 from Paraburkholderia phymatum (strain DSM 17167 / CIP 108236 / LMG 21445 / STM815) (Burkholderia phymatum).